Here is a 363-residue protein sequence, read N- to C-terminus: Protein RecA (363 aa).

Gly79–Thr86 contacts ATP.

It belongs to the RecA family.

It is found in the cytoplasm. In terms of biological role, can catalyze the hydrolysis of ATP in the presence of single-stranded DNA, the ATP-dependent uptake of single-stranded DNA by duplex DNA, and the ATP-dependent hybridization of homologous single-stranded DNAs. It interacts with LexA causing its activation and leading to its autocatalytic cleavage. The polypeptide is Protein RecA (Methylobacterium sp. (strain 4-46)).